The sequence spans 365 residues: Fructose-1,6-bisphosphatase class 1 2 (365 aa).

Mg(2+) contacts are provided by glutamate 100, aspartate 122, leucine 124, and aspartate 125. Substrate contacts are provided by residues aspartate 125–serine 128 and asparagine 221. Glutamate 293 lines the Mg(2+) pocket.

The protein belongs to the FBPase class 1 family. In terms of assembly, homotetramer. Mg(2+) is required as a cofactor.

The protein localises to the cytoplasm. It catalyses the reaction beta-D-fructose 1,6-bisphosphate + H2O = beta-D-fructose 6-phosphate + phosphate. The protein operates within carbohydrate biosynthesis; gluconeogenesis. In Cupriavidus metallidurans (strain ATCC 43123 / DSM 2839 / NBRC 102507 / CH34) (Ralstonia metallidurans), this protein is Fructose-1,6-bisphosphatase class 1 2.